We begin with the raw amino-acid sequence, 426 residues long: Serine--tRNA ligase (426 aa).

L-serine is bound at residue 233-235; sequence TAE. 264 to 266 contributes to the ATP binding site; that stretch reads RRE. Glu287 is an L-serine binding site. ATP is bound at residue 351-354; it reads EISS. An L-serine-binding site is contributed by Ser386.

It belongs to the class-II aminoacyl-tRNA synthetase family. Type-1 seryl-tRNA synthetase subfamily. In terms of assembly, homodimer. The tRNA molecule binds across the dimer.

Its subcellular location is the cytoplasm. The catalysed reaction is tRNA(Ser) + L-serine + ATP = L-seryl-tRNA(Ser) + AMP + diphosphate + H(+). The enzyme catalyses tRNA(Sec) + L-serine + ATP = L-seryl-tRNA(Sec) + AMP + diphosphate + H(+). Its pathway is aminoacyl-tRNA biosynthesis; selenocysteinyl-tRNA(Sec) biosynthesis; L-seryl-tRNA(Sec) from L-serine and tRNA(Sec): step 1/1. In terms of biological role, catalyzes the attachment of serine to tRNA(Ser). Is also able to aminoacylate tRNA(Sec) with serine, to form the misacylated tRNA L-seryl-tRNA(Sec), which will be further converted into selenocysteinyl-tRNA(Sec). This Prochlorococcus marinus (strain NATL1A) protein is Serine--tRNA ligase.